The chain runs to 463 residues: Asparagine--tRNA ligase (463 aa).

Belongs to the class-II aminoacyl-tRNA synthetase family. In terms of assembly, homodimer.

It localises to the cytoplasm. It carries out the reaction tRNA(Asn) + L-asparagine + ATP = L-asparaginyl-tRNA(Asn) + AMP + diphosphate + H(+). The protein is Asparagine--tRNA ligase of Clostridium botulinum (strain ATCC 19397 / Type A).